Consider the following 125-residue polypeptide: MIKLDFEKMGGLIPAVIQDHESGEVLMVAFMDEKTLNLTLETGKTWFFSRTRNKYWMKGEESGNTQEVKEVLTDCDADTVVIKVKQNGPAACHTGNRSCFYVKWENGEWVEHSNPLFDPNEVYKK.

Asp-74 is a binding site for Mg(2+). Cys-75 serves as a coordination point for Zn(2+). Positions 76 and 78 each coordinate Mg(2+). Residues Cys-92 and Cys-99 each coordinate Zn(2+).

This sequence belongs to the PRA-CH family. Homodimer. The cofactor is Mg(2+). It depends on Zn(2+) as a cofactor.

Its subcellular location is the cytoplasm. It carries out the reaction 1-(5-phospho-beta-D-ribosyl)-5'-AMP + H2O = 1-(5-phospho-beta-D-ribosyl)-5-[(5-phospho-beta-D-ribosylamino)methylideneamino]imidazole-4-carboxamide. Its pathway is amino-acid biosynthesis; L-histidine biosynthesis; L-histidine from 5-phospho-alpha-D-ribose 1-diphosphate: step 3/9. In terms of biological role, catalyzes the hydrolysis of the adenine ring of phosphoribosyl-AMP. This Geotalea uraniireducens (strain Rf4) (Geobacter uraniireducens) protein is Phosphoribosyl-AMP cyclohydrolase.